Reading from the N-terminus, the 261-residue chain is Thioredoxin-like protein HCF164, chloroplastic (261 aa).

A chloroplast-targeting transit peptide spans 1-40 (MARLVFSLNLPSSHGFNLSPRNLQSFFVTQTGAPRFRAVR). The disordered stretch occupies residues 39–91 (VRCKPNPESSETKQEKLVIDNGETSSASKEVESSSSVADSSSSSSSGFPESPN). A compositionally biased stretch (low complexity) spans 63 to 84 (SSASKEVESSSSVADSSSSSSS). In terms of domain architecture, Thioredoxin spans 101-229 (VTVIAALSLF…LVENVNALAA (129 aa)). Residues Cys-150 and Cys-153 each act as nucleophile in the active site. A disulfide bridge connects residues Cys-150 and Cys-153.

Belongs to the thioredoxin family. Interacts in vitro with LTO1.

The protein localises to the plastid. Its subcellular location is the chloroplast thylakoid membrane. Thiol-disulfide oxidoreductase that participates in various redox reactions in the chloroplast. Mediates the reduction of PSI-N in the thylakoid lumen. May interact and probably reduce other target proteins of the thylakoid membrane, such as FTSH2, FTSH8, LHCB5, atpA, atpB, atpE, petA and petC. Involved in the biogenesis of the plastid cytochrome b6f complex. Reducing equivalents are provided by stromal M-type thioredoxins and probably transduced through the thylakoid membrane by CCDA. Possesses low insulin disulfide bonds reducing activity. The polypeptide is Thioredoxin-like protein HCF164, chloroplastic (Arabidopsis thaliana (Mouse-ear cress)).